We begin with the raw amino-acid sequence, 389 residues long: SH3 and F-BAR domain-containing protein DDB_G0274695 (389 aa).

One can recognise an F-BAR domain in the interval 3–258 (EQFKDNFWGP…VITQIDKLED (256 aa)). Positions 119 to 192 (KLNKERKDME…QDYRDSVNKL (74 aa)) form a coiled coil. Low complexity predominate over residues 300–328 (LTSSVSSNSLTSSYNSATTTPTPAPRSTP). The disordered stretch occupies residues 300–329 (LTSSVSSNSLTSSYNSATTTPTPAPRSTPI). The region spanning 332-389 (SKKKQAKALYDYVGSDATELDFFAGDIITILDEDESGWFRGELGDRIGLYPSNYCEPI) is the SH3 domain.

This chain is SH3 and F-BAR domain-containing protein DDB_G0274695, found in Dictyostelium discoideum (Social amoeba).